Reading from the N-terminus, the 309-residue chain is Calponin-2 (309 aa).

Ser-2 carries the N-acetylserine modification. Lys-8 and Lys-25 each carry N6-acetyllysine. One can recognise a Calponin-homology (CH) domain in the interval 28–132 (PQKEAELRTW…SLLALAGKAK (105 aa)). At Ser-138 the chain carries Phosphoserine. Calponin-like repeat units follow at residues 166–191 (IGLQMGTNKCASQSGMTAYGTRRHLY), 206–231 (ISLQMGTNKCASQVGMTAPGTRRHIY), and 245–269 (MSLQMGYTQGANQSGQVFGLGRQIY). Residues 283–309 (APSGTGDCPDPGEVPEYPPYYQEEAGY) are disordered.

It belongs to the calponin family. Heart and smooth muscle.

Its function is as follows. Thin filament-associated protein that is implicated in the regulation and modulation of smooth muscle contraction. It is capable of binding to actin, calmodulin and tropomyosin. The interaction of calponin with actin inhibits the actomyosin Mg-ATPase activity. This Homo sapiens (Human) protein is Calponin-2 (CNN2).